We begin with the raw amino-acid sequence, 159 residues long: Cyclic pyranopterin monophosphate synthase (159 aa).

Residues 75–77 and 113–114 each bind substrate; these read LCH and ME. D128 is an active-site residue.

This sequence belongs to the MoaC family. In terms of assembly, homohexamer; trimer of dimers.

It carries out the reaction (8S)-3',8-cyclo-7,8-dihydroguanosine 5'-triphosphate = cyclic pyranopterin phosphate + diphosphate. The protein operates within cofactor biosynthesis; molybdopterin biosynthesis. Catalyzes the conversion of (8S)-3',8-cyclo-7,8-dihydroguanosine 5'-triphosphate to cyclic pyranopterin monophosphate (cPMP). This is Cyclic pyranopterin monophosphate synthase from Cereibacter sphaeroides (strain ATCC 17029 / ATH 2.4.9) (Rhodobacter sphaeroides).